The chain runs to 323 residues: Ribosomal RNA small subunit methyltransferase H (323 aa).

S-adenosyl-L-methionine contacts are provided by residues 39–41, Asp57, Phe84, Asp103, and Gln110; that span reads GGY.

The protein belongs to the methyltransferase superfamily. RsmH family.

The protein resides in the cytoplasm. The catalysed reaction is cytidine(1402) in 16S rRNA + S-adenosyl-L-methionine = N(4)-methylcytidine(1402) in 16S rRNA + S-adenosyl-L-homocysteine + H(+). Specifically methylates the N4 position of cytidine in position 1402 (C1402) of 16S rRNA. In Gluconobacter oxydans (strain 621H) (Gluconobacter suboxydans), this protein is Ribosomal RNA small subunit methyltransferase H.